The following is an 89-amino-acid chain: UPF0335 protein RPE_4107 (89 aa).

Belongs to the UPF0335 family.

The chain is UPF0335 protein RPE_4107 from Rhodopseudomonas palustris (strain BisA53).